The sequence spans 120 residues: uncharacterized protein (120 aa).

The protein localises to the cytoplasm. It localises to the nucleus. This is an uncharacterized protein from Schizosaccharomyces pombe (strain 972 / ATCC 24843) (Fission yeast).